Here is a 336-residue protein sequence, read N- to C-terminus: Glycerol-3-phosphate dehydrogenase [NAD(P)+] (336 aa).

NADPH-binding residues include serine 14, tryptophan 15, arginine 35, arginine 36, and lysine 109. Sn-glycerol 3-phosphate contacts are provided by lysine 109 and glycine 139. Alanine 143 lines the NADPH pocket. Positions 194, 247, 257, 258, and 259 each coordinate sn-glycerol 3-phosphate. The active-site Proton acceptor is lysine 194. NADPH is bound at residue arginine 258. Residue glutamate 284 coordinates NADPH.

It belongs to the NAD-dependent glycerol-3-phosphate dehydrogenase family.

The protein localises to the cytoplasm. The enzyme catalyses sn-glycerol 3-phosphate + NAD(+) = dihydroxyacetone phosphate + NADH + H(+). It carries out the reaction sn-glycerol 3-phosphate + NADP(+) = dihydroxyacetone phosphate + NADPH + H(+). Its pathway is membrane lipid metabolism; glycerophospholipid metabolism. Catalyzes the reduction of the glycolytic intermediate dihydroxyacetone phosphate (DHAP) to sn-glycerol 3-phosphate (G3P), the key precursor for phospholipid synthesis. The polypeptide is Glycerol-3-phosphate dehydrogenase [NAD(P)+] (Streptomyces coelicolor (strain ATCC BAA-471 / A3(2) / M145)).